A 1139-amino-acid polypeptide reads, in one-letter code: Integrin alpha ina-1 (1139 aa).

The N-terminal stretch at 1–19 is a signal peptide; it reads MRECIISWTLLLCLSCVKS. Residues 20 to 1084 lie on the Extracellular side of the membrane; that stretch reads FNLDVNAPIY…PTIGDSRPIP (1065 aa). The stretch at 21 to 85 is one FG-GAP 1 repeat; that stretch reads NLDVNAPIYR…CDINTFYNGG (65 aa). N-linked (GlcNAc...) asparagine glycosylation is found at N108 and N136. 6 FG-GAP repeats span residues 111-171, 180-231, 242-302, 307-370, 378-438, and 448-510; these read RGRT…LQST, LPTT…IFDS, NGDM…SSSK, EDKF…QRKQ, HPPK…IEKF, and GNDL…MEKR. Residue N313 is glycosylated (N-linked (GlcNAc...) asparagine). N-linked (GlcNAc...) asparagine glycans are attached at residues N580, N788, N851, and N1026. Residues 1085–1106 traverse the membrane as a helical segment; the sequence is WWIYVIAAVIGVLILSLIIICL. Residues 1107 to 1139 are Cytoplasmic-facing; it reads SKCGFFKRNRLDQPSLYTAQLKHEREEWADTGL.

It belongs to the integrin alpha chain family. As to quaternary structure, heterodimer of an alpha and a beta subunit. Alpha ina-1 associates with beta pat-3. Interacts (via cytoplasmic domain) with src-1 (when phosphorylated at 'Tyr-416').

The protein resides in the membrane. It is found in the cell projection. The protein localises to the phagocytic cup. It localises to the cytoplasmic vesicle. Its subcellular location is the phagosome membrane. Functionally, plays a role in cell migration, axon fasciculation, and morphogenesis. During gonad morphogenesis, involved in distal tip cell (DTC)-mediated guidance of gonad elongation, in maintaining their sharp tapering morphology and in their migration. Involved in the anterior-posterior positioning of QR neuroblast descendants by regulating the migratory speed of QR.p. Probably by acting as a receptor for apoptotic cells, plays a role in the clearance of apoptotic cells during mid-embryogenesis. In Caenorhabditis elegans, this protein is Integrin alpha ina-1 (ina-1).